A 450-amino-acid chain; its full sequence is Beta-glucosidase (450 aa).

The Proton donor role is filled by glutamate 166. The active-site Nucleophile is glutamate 355.

The protein belongs to the glycosyl hydrolase 1 family.

The enzyme catalyses Hydrolysis of terminal, non-reducing beta-D-glucosyl residues with release of beta-D-glucose.. The protein is Beta-glucosidase (bglA) of Niallia circulans (Bacillus circulans).